We begin with the raw amino-acid sequence, 462 residues long: ATP synthase subunit beta (462 aa).

151–158 lines the ATP pocket; sequence GGAGVGKT.

It belongs to the ATPase alpha/beta chains family. F-type ATPases have 2 components, CF(1) - the catalytic core - and CF(0) - the membrane proton channel. CF(1) has five subunits: alpha(3), beta(3), gamma(1), delta(1), epsilon(1). CF(0) has four main subunits: a(1), b(1), b'(1) and c(9-12).

It localises to the cell inner membrane. The enzyme catalyses ATP + H2O + 4 H(+)(in) = ADP + phosphate + 5 H(+)(out). Functionally, produces ATP from ADP in the presence of a proton gradient across the membrane. The catalytic sites are hosted primarily by the beta subunits. This chain is ATP synthase subunit beta, found in Chlorobium chlorochromatii (strain CaD3).